The following is a 191-amino-acid chain: Flavin reductase (NADH) (191 aa).

46-52 (YGLTCSA) contacts FAD. S55 serves as a coordination point for NAD(+). 72-73 (RV) is an FAD binding site. Residues H144 and 166–169 (YWRR) contribute to the NAD(+) site.

It belongs to the non-flavoprotein flavin reductase family.

The catalysed reaction is a reduced flavin + NAD(+) = an oxidized flavin + NADH + 2 H(+). Catalyzes the reduction of flavin by NADH. Subsequently, the reduced flavins is transferred to the tetracycline 7-halogenase CtcP. The protein is Flavin reductase (NADH) of Kitasatospora aureofaciens (Streptomyces aureofaciens).